The primary structure comprises 68 residues: Large ribosomal subunit protein uL29 (68 aa).

The protein belongs to the universal ribosomal protein uL29 family.

The chain is Large ribosomal subunit protein uL29 from Rhodopseudomonas palustris (strain BisA53).